The chain runs to 930 residues: Isoleucine--tRNA ligase (930 aa).

Positions 57–67 (PYANGHLHIGH) match the 'HIGH' region motif. Glu-573 is an L-isoleucyl-5'-AMP binding site. The 'KMSKS' region motif lies at 614–618 (KMSKS). Lys-617 contributes to the ATP binding site. Zn(2+) contacts are provided by Cys-902, Cys-905, Cys-918, and Cys-921.

Belongs to the class-I aminoacyl-tRNA synthetase family. IleS type 1 subfamily. As to quaternary structure, monomer. Zn(2+) is required as a cofactor.

The protein localises to the cytoplasm. It carries out the reaction tRNA(Ile) + L-isoleucine + ATP = L-isoleucyl-tRNA(Ile) + AMP + diphosphate. Functionally, catalyzes the attachment of isoleucine to tRNA(Ile). As IleRS can inadvertently accommodate and process structurally similar amino acids such as valine, to avoid such errors it has two additional distinct tRNA(Ile)-dependent editing activities. One activity is designated as 'pretransfer' editing and involves the hydrolysis of activated Val-AMP. The other activity is designated 'posttransfer' editing and involves deacylation of mischarged Val-tRNA(Ile). The chain is Isoleucine--tRNA ligase from Helicobacter hepaticus (strain ATCC 51449 / 3B1).